The sequence spans 153 residues: UPF0102 protein Pnap_0271 (153 aa).

This sequence belongs to the UPF0102 family.

The polypeptide is UPF0102 protein Pnap_0271 (Polaromonas naphthalenivorans (strain CJ2)).